Here is a 1335-residue protein sequence, read N- to C-terminus: Xanthine dehydrogenase/oxidase (1335 aa).

One can recognise a 2Fe-2S ferredoxin-type domain in the interval 7–94 (DELVFFVNGK…HVAVTTVEGI (88 aa)). [2Fe-2S] cluster is bound by residues cysteine 46, cysteine 51, cysteine 54, cysteine 76, cysteine 115, cysteine 118, cysteine 150, and cysteine 152. Residues 231 to 416 (FEGERVTWIQ…VSIVIPYSRK (186 aa)) form the FAD-binding PCMH-type domain. FAD is bound by residues 259-266 (LVVGNTEI), phenylalanine 339, 349-353 (SIGGN), aspartate 362, leucine 406, and lysine 424. An intrachain disulfide couples cysteine 538 to cysteine 995. Mo-molybdopterin-binding residues include glutamine 770 and phenylalanine 801. Glutamate 805 and arginine 883 together coordinate substrate. Residue arginine 915 participates in Mo-molybdopterin binding. Substrate contacts are provided by phenylalanine 917 and threonine 1013. Alanine 1082 lines the Mo-molybdopterin pocket. Glutamate 1264 acts as the Proton acceptor in catalysis.

It belongs to the xanthine dehydrogenase family. Homodimer. Interacts with BTN1A1. Requires FAD as cofactor. It depends on Mo-molybdopterin as a cofactor. The cofactor is [2Fe-2S] cluster. Post-translationally, subject to partial proteolysis; this alters the enzyme from the dehydrogenase form (D) to the oxidase form (O). Contains sulfhydryl groups that are easily oxidized (in vitro); this alters the enzyme from the dehydrogenase form (D) to the oxidase form (O).

The protein resides in the cytoplasm. The protein localises to the peroxisome. It localises to the secreted. The enzyme catalyses xanthine + NAD(+) + H2O = urate + NADH + H(+). It carries out the reaction hypoxanthine + NAD(+) + H2O = xanthine + NADH + H(+). It catalyses the reaction xanthine + O2 + H2O = urate + H2O2. Can be converted from the dehydrogenase form (D) to the oxidase form (O) irreversibly by proteolysis or reversibly through the oxidation of sulfhydryl groups. Its function is as follows. Key enzyme in purine degradation. Catalyzes the oxidation of hypoxanthine to xanthine. Catalyzes the oxidation of xanthine to uric acid. Contributes to the generation of reactive oxygen species. The sequence is that of Xanthine dehydrogenase/oxidase (Xdh) from Mus musculus (Mouse).